Consider the following 220-residue polypeptide: Protein GrpE (220 aa).

2 stretches are compositionally biased toward polar residues: residues 1–12 (MEQGDKQATYNE) and 50–63 (AAST…QTSV). Residues 1–67 (MEQGDKQATY…AEQTSVEAEE (67 aa)) are disordered.

Belongs to the GrpE family. Homodimer.

It localises to the cytoplasm. Participates actively in the response to hyperosmotic and heat shock by preventing the aggregation of stress-denatured proteins, in association with DnaK and GrpE. It is the nucleotide exchange factor for DnaK and may function as a thermosensor. Unfolded proteins bind initially to DnaJ; upon interaction with the DnaJ-bound protein, DnaK hydrolyzes its bound ATP, resulting in the formation of a stable complex. GrpE releases ADP from DnaK; ATP binding to DnaK triggers the release of the substrate protein, thus completing the reaction cycle. Several rounds of ATP-dependent interactions between DnaJ, DnaK and GrpE are required for fully efficient folding. The chain is Protein GrpE from Geobacillus thermodenitrificans (strain NG80-2).